The chain runs to 269 residues: Shikimate dehydrogenase (NADP(+)) (269 aa).

Shikimate-binding positions include 17 to 19 (SKS) and Thr-64. The Proton acceptor role is filled by Lys-68. NADP(+) is bound at residue Glu-80. Positions 89 and 105 each coordinate shikimate. NADP(+) contacts are provided by residues 130 to 134 (GAGGA), 154 to 159 (NRTHAK), and Met-213. Tyr-215 is a shikimate binding site. Gly-237 contacts NADP(+).

The protein belongs to the shikimate dehydrogenase family. Homodimer.

The catalysed reaction is shikimate + NADP(+) = 3-dehydroshikimate + NADPH + H(+). The protein operates within metabolic intermediate biosynthesis; chorismate biosynthesis; chorismate from D-erythrose 4-phosphate and phosphoenolpyruvate: step 4/7. In terms of biological role, involved in the biosynthesis of the chorismate, which leads to the biosynthesis of aromatic amino acids. Catalyzes the reversible NADPH linked reduction of 3-dehydroshikimate (DHSA) to yield shikimate (SA). This chain is Shikimate dehydrogenase (NADP(+)), found in Neisseria pharyngis.